The sequence spans 322 residues: Beta-ketoacyl-[acyl-carrier-protein] synthase III (322 aa).

Catalysis depends on residues Cys-112 and His-249. The ACP-binding stretch occupies residues 250–254 (QANQR). The active site involves Asn-279.

The protein belongs to the thiolase-like superfamily. FabH family. As to quaternary structure, homodimer.

It is found in the cytoplasm. The enzyme catalyses malonyl-[ACP] + acetyl-CoA + H(+) = 3-oxobutanoyl-[ACP] + CO2 + CoA. It functions in the pathway lipid metabolism; fatty acid biosynthesis. Its function is as follows. Catalyzes the condensation reaction of fatty acid synthesis by the addition to an acyl acceptor of two carbons from malonyl-ACP. Catalyzes the first condensation reaction which initiates fatty acid synthesis and may therefore play a role in governing the total rate of fatty acid production. Possesses both acetoacetyl-ACP synthase and acetyl transacylase activities. Its substrate specificity determines the biosynthesis of branched-chain and/or straight-chain of fatty acids. The sequence is that of Beta-ketoacyl-[acyl-carrier-protein] synthase III from Caulobacter vibrioides (strain ATCC 19089 / CIP 103742 / CB 15) (Caulobacter crescentus).